The chain runs to 66 residues: Opicalcin-2 (66 aa).

The signal sequence occupies residues Met-1 to Ala-22. The propeptide occupies Asp-23–Glu-31. Intrachain disulfides connect Cys-36-Cys-50, Cys-43-Cys-54, and Cys-49-Cys-65. Residues Lys-55–Arg-57 are essential for stimulation of [3H]ryanodine binding to RYR1.

It belongs to the scorpion calcin family. In terms of tissue distribution, expressed by the venom gland.

The protein resides in the secreted. Functionally, this toxin stabilizes ryanodine receptor 1 (RyR1) opening in a long-lasting subconductance state (40% of the full conductance state). Furthermore, it triggers calcium release from sarcoplasmic vesicles (64.2 nM are enough to induce a sharp release, and 50% of the total calcium is released after toxin (100 nM) addition) probably by acting as a cell-penetrating peptide (CPP). In addition, it has been shown to dose-dependently stimulate ryanodine binding to RyR1 (EC(50)=3.2 nM). It also augments the bell-shaped calcium-[3H]ryanodine binding curve that is maximal at about 10 uM calcium concentration. It binds a different site as ryanodine. It acts synergistically with caffeine. In vivo, intracerebroventricular injection into mice induces neurotoxic symptoms, followed by death. The sequence is that of Opicalcin-2 from Opistophthalmus carinatus (African yellow leg scorpion).